Here is a 127-residue protein sequence, read N- to C-terminus: Fumarate reductase subunit C (127 aa).

The next 3 membrane-spanning stretches (helical) occupy residues 30-50 (ATVLPLILFTLFLTFGLGCLV), 58-78 (GWLAFMANPIVVAINIVALLG), and 107-127 (IIVLTQWAAVAFISLIVLIVV).

The protein belongs to the FrdC family. In terms of assembly, part of an enzyme complex containing four subunits: a flavoprotein (FrdA), an iron-sulfur protein (FrdB), and two hydrophobic anchor proteins (FrdC and FrdD).

Its subcellular location is the cell inner membrane. Anchors the catalytic components of the fumarate reductase complex to the cell membrane, binds quinones. This Vibrio parahaemolyticus serotype O3:K6 (strain RIMD 2210633) protein is Fumarate reductase subunit C.